The primary structure comprises 314 residues: tRNA pseudouridine synthase B (314 aa).

His43 provides a ligand contact to substrate. The active-site Nucleophile is the Asp48. 3 residues coordinate substrate: Tyr76, Tyr179, and Leu200.

Belongs to the pseudouridine synthase TruB family. Type 1 subfamily.

The enzyme catalyses uridine(55) in tRNA = pseudouridine(55) in tRNA. Functionally, responsible for synthesis of pseudouridine from uracil-55 in the psi GC loop of transfer RNAs. The protein is tRNA pseudouridine synthase B of Salmonella choleraesuis (strain SC-B67).